The sequence spans 134 residues: Phosphoribosyl-AMP cyclohydrolase (134 aa).

Asp-80 contributes to the Mg(2+) binding site. Cys-81 provides a ligand contact to Zn(2+). 2 residues coordinate Mg(2+): Asp-82 and Asp-84. The Zn(2+) site is built by Cys-98 and Cys-105.

It belongs to the PRA-CH family. In terms of assembly, homodimer. Mg(2+) serves as cofactor. Zn(2+) is required as a cofactor.

It localises to the cytoplasm. The enzyme catalyses 1-(5-phospho-beta-D-ribosyl)-5'-AMP + H2O = 1-(5-phospho-beta-D-ribosyl)-5-[(5-phospho-beta-D-ribosylamino)methylideneamino]imidazole-4-carboxamide. It functions in the pathway amino-acid biosynthesis; L-histidine biosynthesis; L-histidine from 5-phospho-alpha-D-ribose 1-diphosphate: step 3/9. In terms of biological role, catalyzes the hydrolysis of the adenine ring of phosphoribosyl-AMP. The protein is Phosphoribosyl-AMP cyclohydrolase of Janthinobacterium sp. (strain Marseille) (Minibacterium massiliensis).